Here is a 55-residue protein sequence, read N- to C-terminus: Large ribosomal subunit protein bL33 (55 aa).

The protein belongs to the bacterial ribosomal protein bL33 family.

The protein is Large ribosomal subunit protein bL33 of Orientia tsutsugamushi (strain Boryong) (Rickettsia tsutsugamushi).